We begin with the raw amino-acid sequence, 647 residues long: tRNA 5-methylaminomethyl-2-thiouridine biosynthesis bifunctional protein MnmC (647 aa).

Residues 1 to 235 (MSIPPFSQAS…KRDMLCGRFT (235 aa)) are tRNA (mnm(5)s(2)U34)-methyltransferase. Positions 250 to 647 (IGGGIAGTAS…RGLACHPLRR (398 aa)) are FAD-dependent cmnm(5)s(2)U34 oxidoreductase.

This sequence in the N-terminal section; belongs to the methyltransferase superfamily. tRNA (mnm(5)s(2)U34)-methyltransferase family. The protein in the C-terminal section; belongs to the DAO family. FAD serves as cofactor.

Its subcellular location is the cytoplasm. It carries out the reaction 5-aminomethyl-2-thiouridine(34) in tRNA + S-adenosyl-L-methionine = 5-methylaminomethyl-2-thiouridine(34) in tRNA + S-adenosyl-L-homocysteine + H(+). Catalyzes the last two steps in the biosynthesis of 5-methylaminomethyl-2-thiouridine (mnm(5)s(2)U) at the wobble position (U34) in tRNA. Catalyzes the FAD-dependent demodification of cmnm(5)s(2)U34 to nm(5)s(2)U34, followed by the transfer of a methyl group from S-adenosyl-L-methionine to nm(5)s(2)U34, to form mnm(5)s(2)U34. The protein is tRNA 5-methylaminomethyl-2-thiouridine biosynthesis bifunctional protein MnmC of Methylobacillus flagellatus (strain ATCC 51484 / DSM 6875 / VKM B-1610 / KT).